Consider the following 480-residue polypeptide: Dihydrolipoyllysine-residue acetyltransferase component 4 of pyruvate dehydrogenase complex, chloroplastic (480 aa).

A chloroplast-targeting transit peptide spans 1–53 (MAVSSSSFLSTASLTNSKSNISFASSVSPSLRSVVFRSTTPATSHRRSMTVRS). Residues 55–133 (IREIFMPALS…AAIGLLAETE (79 aa)) enclose the Lipoyl-binding domain. Residue Lys96 is modified to N6-lipoyllysine. 2 disordered regions span residues 140–168 (KSKAASKSSSSVAEAVVPSPPPVTSSPAP) and 224–245 (AGIAPSKSSIAPPPPPPPPVTA). Low complexity predominate over residues 142-156 (KAASKSSSSVAEAVV). The Peripheral subunit-binding (PSBD) domain maps to 187 to 224 (VATPYAKKLAKQHKVDIESVAGTGPFGRITASDVETAA). Over residues 234-243 (APPPPPPPPV) the composition is skewed to pro residues. Residue His453 is part of the active site.

The protein belongs to the 2-oxoacid dehydrogenase family. It depends on (R)-lipoate as a cofactor.

The protein localises to the plastid. It is found in the chloroplast stroma. It catalyses the reaction N(6)-[(R)-dihydrolipoyl]-L-lysyl-[protein] + acetyl-CoA = N(6)-[(R)-S(8)-acetyldihydrolipoyl]-L-lysyl-[protein] + CoA. In terms of biological role, the pyruvate dehydrogenase complex catalyzes the overall conversion of pyruvate to acetyl-CoA and CO(2). It contains multiple copies of three enzymatic components: pyruvate dehydrogenase (E1), dihydrolipoamide acetyltransferase (E2) and lipoamide dehydrogenase (E3). The protein is Dihydrolipoyllysine-residue acetyltransferase component 4 of pyruvate dehydrogenase complex, chloroplastic (LTA2) of Arabidopsis thaliana (Mouse-ear cress).